Consider the following 156-residue polypeptide: Ribosomal RNA large subunit methyltransferase H (156 aa).

S-adenosyl-L-methionine contacts are provided by residues leucine 73, glycine 104, and 123-128; that span reads LSALTL.

It belongs to the RNA methyltransferase RlmH family. Homodimer.

It localises to the cytoplasm. The enzyme catalyses pseudouridine(1915) in 23S rRNA + S-adenosyl-L-methionine = N(3)-methylpseudouridine(1915) in 23S rRNA + S-adenosyl-L-homocysteine + H(+). In terms of biological role, specifically methylates the pseudouridine at position 1915 (m3Psi1915) in 23S rRNA. This is Ribosomal RNA large subunit methyltransferase H from Shewanella baltica (strain OS223).